The sequence spans 1447 residues: Inositol 1,4,5-triphosphate receptor associated 2 (1447 aa).

At 1–1388 the chain is on the cytoplasmic side; that stretch reads MDVGVTPRRH…RPAVSRGARG (1388 aa). Disordered stretches follow at residues 64 to 96 and 420 to 439; these read VRPDDSDSASSAGMLTPTASPGPGSSCNTPRAP and LSLTSSEESRAQAAAQRKQM. Residues 71-92 are compositionally biased toward polar residues; the sequence is SASSAGMLTPTASPGPGSSCNT. 2 coiled-coil regions span residues 354–518 and 665–731; these read FCVA…EYSS and TDWI…DNRE. The span at 420–436 shows a compositional bias: low complexity; the sequence is LSLTSSEESRAQAAAQR. Disordered stretches follow at residues 790 to 828, 841 to 860, 991 to 1132, 1267 to 1289, and 1355 to 1379; these read KQEEEEPTETVSDKEKITAKSEGEGEATYDSGVENEEPQ, KKSERESNEAPFVGEGGEQR, PVAE…SPSD, NERSFGSHSERDDFRNKKQTTSN, and DEPTLMNSPTPSPTDNAPPSLMEGR. Positions 800-812 are enriched in basic and acidic residues; sequence VSDKEKITAKSEG. The span at 1021-1035 shows a compositional bias: polar residues; sequence KKTVVTSDSNSTGSA. Basic and acidic residues-rich tracts occupy residues 1037–1049 and 1080–1096; these read SLKDPSEKVKDMT and KKEMSSMEVIEEQKAQE. Residues 1076-1265 form a necessary for spindle and spindle pole localization region; sequence RNKLKKEMSS…ELLELRENLT (190 aa). The span at 1110–1119 shows a compositional bias: polar residues; the sequence is TSVSSENASD. The span at 1120 to 1132 shows a compositional bias: basic and acidic residues; sequence STKDDKNSLSPSD. Residues 1359 to 1371 show a composition bias toward polar residues; it reads LMNSPTPSPTDNA. The tract at residues 1388–1447 is necessary for nuclear membrane localization; that stretch reads GIWIWVALFVVLAVLLALLASLMLQPAVDAAPVGTGDSWMTIQQLLWPYTGLRHNGQPPV. The helical; Anchor for type IV membrane protein transmembrane segment at 1389–1409 threads the bilayer; sequence IWIWVALFVVLAVLLALLASL. Residues 1410–1447 lie on the Lumenal side of the membrane; sequence MLQPAVDAAPVGTGDSWMTIQQLLWPYTGLRHNGQPPV.

This sequence belongs to the IRAG2 family.

It is found in the endoplasmic reticulum membrane. Its subcellular location is the nucleus envelope. The protein localises to the cytoplasm. It localises to the cytoskeleton. The protein resides in the microtubule organizing center. It is found in the centrosome. Its subcellular location is the spindle pole. The protein localises to the chromosome. In terms of biological role, a maternally expressed membrane and cytoskeletal linker protein, which is essential for attachment of the centrosome to the male pronucleus. Promotes male and female pronucleus congression and subsequent fusion after fertilization. Congression is mediated by the sperm aster microtubules. The protein is Inositol 1,4,5-triphosphate receptor associated 2 (irag2) of Danio rerio (Zebrafish).